Here is a 234-residue protein sequence, read N- to C-terminus: UPF0309 protein lmo0025 (234 aa).

Positions 31–205 (VADSIMNDGI…ELMLEKGYTP (175 aa)) constitute an SIS domain.

Belongs to the UPF0309 family.

In Listeria monocytogenes serovar 1/2a (strain ATCC BAA-679 / EGD-e), this protein is UPF0309 protein lmo0025.